A 284-amino-acid polypeptide reads, in one-letter code: Nucleotide-binding protein NMCC_0698 (284 aa).

Position 8–15 (8–15 (GLSGSGKS)) interacts with ATP. Residue 58 to 61 (DVRS) coordinates GTP.

Belongs to the RapZ-like family.

Functionally, displays ATPase and GTPase activities. This chain is Nucleotide-binding protein NMCC_0698, found in Neisseria meningitidis serogroup C (strain 053442).